A 156-amino-acid polypeptide reads, in one-letter code: Calglandulin (156 aa).

EF-hand domains are found at residues 8 to 43 (EQITEYKGIFEMFDEEGNGLVKTDDLESLMSLIGIN), 44 to 79 (PTKRDLANMAKDVDKDKKGTFNCEGFLVLMGIYHEK), 82 to 117 (NQDEELRAAFKVFDKEHKGYIEWDTLKYVLMNAGEP), and 118 to 153 (LNEHEAELMMKEADKDGDGTIDYEEFVAMMTGESFK). 5 residues coordinate Ca(2+): Asp-131, Asp-133, Asp-135, Thr-137, and Glu-142.

This sequence belongs to the calmodulin family. Calglandulin subfamily. In terms of tissue distribution, expressed by the venom gland.

Its subcellular location is the cytoplasm. Its function is as follows. May be involved in the cellular control mechanism of the secretion of toxins from the gland into the venom. This chain is Calglandulin, found in Tropidechis carinatus (Australian rough-scaled snake).